A 128-amino-acid chain; its full sequence is Small ribosomal subunit protein uS9 (128 aa).

The protein belongs to the universal ribosomal protein uS9 family.

The sequence is that of Small ribosomal subunit protein uS9 from Christiangramia forsetii (strain DSM 17595 / CGMCC 1.15422 / KT0803) (Gramella forsetii).